Here is a 292-residue protein sequence, read N- to C-terminus: Proteasome subunit beta 2 (292 aa).

The propeptide at 1–59 is removed in mature form; by autocatalysis; that stretch reads MTVDRAPRITDGDTRLSFGSNLSSFSEYLRVHAPEHLPQNRFADTGGVVMGGGDVAPHG. Catalysis depends on Thr-60, which acts as the Nucleophile.

This sequence belongs to the peptidase T1B family. In terms of assembly, the 20S proteasome core is composed of 14 alpha and 14 beta subunits that assemble into four stacked heptameric rings, resulting in a barrel-shaped structure. The two inner rings, each composed of seven catalytic beta subunits, are sandwiched by two outer rings, each composed of seven alpha subunits. All four combinations of alpha- and beta-subunits (beta2-alpha1, beta2-alpha2, beta1-alpha2 and beta1-alpha1) yield fully assembled and proteolytically active proteasomes. The catalytic chamber with the active sites is on the inside of the barrel. Has probably a gated structure, the ends of the cylinder being occluded by the N-termini of the alpha-subunits. Is likely capped by the proteasome-associated ATPase, ARC.

Its subcellular location is the cytoplasm. The enzyme catalyses Cleavage of peptide bonds with very broad specificity.. Its pathway is protein degradation; proteasomal Pup-dependent pathway. With respect to regulation, the formation of the proteasomal ATPase ARC-20S proteasome complex, likely via the docking of the C-termini of ARC into the intersubunit pockets in the alpha-rings, may trigger opening of the gate for substrate entry. Interconversion between the open-gate and close-gate conformations leads to a dynamic regulation of the 20S proteasome proteolysis activity. Its function is as follows. Component of the proteasome core, a large protease complex with broad specificity involved in protein degradation. The R.erythropolis proteasomes are able to cleave oligopeptides after Tyr, Phe and Leu, very poorly after Arg but not after Glu. Thus, displays chymotrypsin-like activity, low trypsin-like activity but no caspase-like activity. This is Proteasome subunit beta 2 from Rhodococcus erythropolis (Arthrobacter picolinophilus).